The chain runs to 950 residues: Inactive atromentin synthetase invA4 (950 aa).

Residues 37–460 form an adenylation (A) domain region; it reads SRAVSQYPNH…SGRIKDTVVV (424 aa). A Carrier domain is found at 592 to 670; sequence APSTETEKTL…TLAKYVDSLV (79 aa). The thiolation and peptide carrier (T) domain stretch occupies residues 597–667; that stretch reads TEKTLAGIYA…EIITLAKYVD (71 aa). Position 629 is an O-(pantetheine 4'-phosphoryl)serine (S629). Residues 693–797 are thioesterase (TE) domain; the sequence is PIFMVHPGIG…GIIDMIPHHM (105 aa).

The protein belongs to the ATP-dependent AMP-binding enzyme family.

In terms of biological role, inactive atromentin synthetase homolog. Does not accept 4-hydroxyphenylpyruvate (4-HPP) as substrate. The chain is Inactive atromentin synthetase invA4 (invA4) from Paxillus involutus (Naked brimcap).